Consider the following 65-residue polypeptide: Metallothionein-like protein 3B (65 aa).

The protein belongs to the metallothionein superfamily. Type 15 family.

Its function is as follows. Metallothioneins have a high content of cysteine residues that bind various heavy metals. This is Metallothionein-like protein 3B (MT3B) from Oryza sativa subsp. indica (Rice).